Consider the following 555-residue polypeptide: Dihydroxy-acid dehydratase (555 aa).

A Mg(2+)-binding site is contributed by D78. C119 lines the [2Fe-2S] cluster pocket. The Mg(2+) site is built by D120 and K121. K121 carries the post-translational modification N6-carboxylysine. [2Fe-2S] cluster is bound at residue C191. E444 contributes to the Mg(2+) binding site. Residue S470 is the Proton acceptor of the active site.

Belongs to the IlvD/Edd family. As to quaternary structure, homodimer. [2Fe-2S] cluster is required as a cofactor. It depends on Mg(2+) as a cofactor.

The catalysed reaction is (2R)-2,3-dihydroxy-3-methylbutanoate = 3-methyl-2-oxobutanoate + H2O. The enzyme catalyses (2R,3R)-2,3-dihydroxy-3-methylpentanoate = (S)-3-methyl-2-oxopentanoate + H2O. The protein operates within amino-acid biosynthesis; L-isoleucine biosynthesis; L-isoleucine from 2-oxobutanoate: step 3/4. It functions in the pathway amino-acid biosynthesis; L-valine biosynthesis; L-valine from pyruvate: step 3/4. Functionally, functions in the biosynthesis of branched-chain amino acids. Catalyzes the dehydration of (2R,3R)-2,3-dihydroxy-3-methylpentanoate (2,3-dihydroxy-3-methylvalerate) into 2-oxo-3-methylpentanoate (2-oxo-3-methylvalerate) and of (2R)-2,3-dihydroxy-3-methylbutanoate (2,3-dihydroxyisovalerate) into 2-oxo-3-methylbutanoate (2-oxoisovalerate), the penultimate precursor to L-isoleucine and L-valine, respectively. This Nitratidesulfovibrio vulgaris (strain DSM 19637 / Miyazaki F) (Desulfovibrio vulgaris) protein is Dihydroxy-acid dehydratase.